The following is a 211-amino-acid chain: Probable transcription repressor protein RGM1 (211 aa).

The short motif at 6 to 11 is the Nuclear localization signal element; it reads PKRNKD. 2 C2H2-type zinc fingers span residues 19 to 44 and 50 to 73; these read YRCV…IRKH and FQCN…SSVH. The segment at 178–211 is disordered; sequence NIVELPPDSSDTPASPSKVQSFDQAKDASPNAKK. Residues 183 to 194 show a composition bias toward low complexity; that stretch reads PPDSSDTPASPS.

Its subcellular location is the nucleus. The protein is Probable transcription repressor protein RGM1 (RGM1) of Saccharomyces cerevisiae (strain ATCC 204508 / S288c) (Baker's yeast).